The following is a 147-amino-acid chain: Large ribosomal subunit protein uL15 (147 aa).

The segment covering 1–13 (MELHSLKAAEGSR) has biased composition (basic and acidic residues). The interval 1-57 (MELHSLKAAEGSRKVRNRVGRGTSSGNGKTSGRGQKGQKSRSGGGVRPGFEGGQTEL) is disordered. Gly residues-rich tracts occupy residues 23–35 (TSSG…GRGQ) and 42–52 (SGGGVRPGFEG).

This sequence belongs to the universal ribosomal protein uL15 family. As to quaternary structure, part of the 50S ribosomal subunit.

Binds to the 23S rRNA. The polypeptide is Large ribosomal subunit protein uL15 (Lactococcus lactis subsp. cremoris (strain MG1363)).